The following is an 85-amino-acid chain: Large ribosomal subunit protein bL27 (85 aa).

Residues 1–21 form a disordered region; it reads MAHKKAGGSTRNGRDSRGKRL.

It belongs to the bacterial ribosomal protein bL27 family.

The polypeptide is Large ribosomal subunit protein bL27 (Blochmanniella floridana).